A 376-amino-acid chain; its full sequence is uncharacterized protein (376 aa).

Residues 1–31 form the signal peptide; it reads MSRHKVYKAISSYVIIAIIIIAIVAVVGVLL. A disordered region spans residues 37–57; sequence SSSSVTSTTTPTTSSSVSPSS.

This sequence belongs to the bacterial solute-binding protein 1 family. WtpA subfamily.

This is an uncharacterized protein from Sulfurisphaera tokodaii (strain DSM 16993 / JCM 10545 / NBRC 100140 / 7) (Sulfolobus tokodaii).